We begin with the raw amino-acid sequence, 1303 residues long: MLDVNFFDELRIGLATADDIRQWSYGEVKKPETINYRTLKPEKDGLFCEKIFGPTRDWECYCGKYKRVRFKGIICERCGVEVTRAKVRRERMGHIELAASVTHIWYFKGVPSRLGYLLDLAPKDLEKIIYFAAYVITSVNTEMRHNEMSTLEAEIGVERKQIADQRDADLEARAQKLEADLAELEQEGAKSDVRRKVKEGGEREMRQLRDRAQRELDKLDEIWETFTKLEPRQLIADELLYRELYDRFGEYFTGGMGAESIQALLQDFDINAEADQLRETIRSGKGQKKLRALKRLKVVAAFQATGNNPSGMVLNCVPVIPPDLRPMVQLDGGRFATSDLNDLYRRVINRNNRLKRLIDLGAPEIIVNNEKRMLQESVDALFDNGRRGRPVTGPGNRPLKSLSDLLKGKQGRFRQNLLGKRVDYSGRSVIVVGPQLKLHQCGLPKEMAVELFKPFVMKRLVDLNHAQNIKSAKRMVERQRPQVWDVLEEVIAEHPVLLNRAPTLHRLGIQAFEPQLVEGKAIQLHPLVCEAFNADFDGDQMAVHLPLSAEAQAEARILMLSSNNILSPASGRPLAMPRLDMVTGLYHLTRQLDGAKGEGQSFSSVGEAIMAFDRGGLDLQAKVKIRVRDLVPNAEQRPEDWEPGQPWLAETTLGRVWFNELLPEDYPFVNDLLPKKRQAAIVNDLAERYPMVTVAQTLDKLKDAGFHWATRSGVTVSISDVVVPPNKTEILDGYEAKADQVEKRYRRGALSYQERNAELVKVWTAAKDEVAEAMEANFPEDNSISMIVKSGAAGNMTQVVQLAGMRGLVSNPKGEYIPRPIKANFREGLSVLEYFISNHGARKGLADTALRTADSGYLTRRLVDVSQDVIVRETDCGTERGIRMPIAEKLPDGKLLRDAHVETSVYARTTAEDVTDSDGNVVLARGSDLGDPAIEKLLAAGVTKVKVRSVLTCESGVGVCAVCYGRSMATGKLVDVGEAVGIVAAQSIGEPGTQLTMRTFHQGGVAGDDITTGLPRVQELFEARVPKGKAPIADAPGRIRMEDNDRYWKITIIPDDGSEEIVYDKLSKRQRLAAISVDGTERQITDGDHVDVGQQLLEGAVDPHEVLRVMGPREAQLHLVREVQEVYRSQGVGIHDKHVEVIVRQMLRRVIIIDSGATEFLPGSPVERSQFEGENRRVVAEGGDPASGRPVLMGITKASLATESWLSAASFQETTRILTNAAIEGASDKLVGLKENVIIGKLIPAGTGINRYRNIQVQPTEEARAAAYAIPSYDDGYYTPDVFGTGTGAAVPLDDYDFGRDYR.

Zn(2+)-binding residues include C60, C62, C75, and C78. Mg(2+)-binding residues include D535, D537, and D539. The Zn(2+) site is built by C876, C953, C960, and C963.

Belongs to the RNA polymerase beta' chain family. As to quaternary structure, the RNAP catalytic core consists of 2 alpha, 1 beta, 1 beta' and 1 omega subunit. When a sigma factor is associated with the core the holoenzyme is formed, which can initiate transcription. It depends on Mg(2+) as a cofactor. The cofactor is Zn(2+).

It carries out the reaction RNA(n) + a ribonucleoside 5'-triphosphate = RNA(n+1) + diphosphate. Its function is as follows. DNA-dependent RNA polymerase catalyzes the transcription of DNA into RNA using the four ribonucleoside triphosphates as substrates. This chain is DNA-directed RNA polymerase subunit beta', found in Saccharopolyspora erythraea (strain ATCC 11635 / DSM 40517 / JCM 4748 / NBRC 13426 / NCIMB 8594 / NRRL 2338).